A 359-amino-acid chain; its full sequence is Type-1 angiotensin II receptor (359 aa).

Residues 1 to 25 are Extracellular-facing; that stretch reads MMLNSSTEDGIKRIQDDCPKAGRHN. The N-linked (GlcNAc...) asparagine glycan is linked to Asn-4. Positions 15 and 17 each coordinate angiotensin II. 2 disulfide bridges follow: Cys-18-Cys-274 and Cys-101-Cys-180. A helical membrane pass occupies residues 26-55; that stretch reads YIFVMIPTLYSIIFVVGIFGNSLAVIVIYF. At 56–61 the chain is on the cytoplasmic side; it reads YMKLKT. A helical transmembrane segment spans residues 62–89; that stretch reads VASVFLLNLALADLCFLLTLPLWAVYTA. At 90-98 the chain is on the extracellular side; sequence MEYRWPFGN. Residues 99–125 traverse the membrane as a helical segment; sequence YLCKIASASVSFNLYASVFLLTCLSID. Over 126 to 141 the chain is Cytoplasmic; that stretch reads RYLAIVHPMKSRLRRT. A helical transmembrane segment spans residues 142–165; it reads MLVAKVTCIIIWLLAGLASLPAII. Residues 166 to 190 lie on the Extracellular side of the membrane; the sequence is HRNVFFIENTNITVCAFHYESQNST. Angiotensin II is bound at residue Arg-167. N-linked (GlcNAc...) asparagine glycosylation occurs at Asn-176. Angiotensin II-binding residues include Phe-182, His-183, and Tyr-184. N-linked (GlcNAc...) asparagine glycosylation is present at Asn-188. Residues 191-216 traverse the membrane as a helical segment; the sequence is LPIGLGLTKNILGFLFPFLIILTSYT. Lys-199 contacts angiotensin II. Residues 217-239 are Cytoplasmic-facing; that stretch reads LIWKALKKAYEIQKNKPRNDDIF. The helical transmembrane segment at 240-268 threads the bilayer; it reads KIIMAIVLFFFFSWVPHQIFTFLDVLIQL. At 269–278 the chain is on the extracellular side; that stretch reads GVIHDCRIAD. Residues 279–304 traverse the membrane as a helical segment; the sequence is IVDTAMPITICIAYFNNCLNPLFYGF. The Cytoplasmic segment spans residues 305-359; it reads LGKKFKKYFLQLLKYIPPKAKSHSNLSTKMSTLSYRPSDNVSSSSKKPVPCFEVE. Over residues 335–350 the composition is skewed to polar residues; the sequence is STLSYRPSDNVSSSSK. The interval 335-359 is disordered; it reads STLSYRPSDNVSSSSKKPVPCFEVE. The S-palmitoyl cysteine moiety is linked to residue Cys-355.

Belongs to the G-protein coupled receptor 1 family. In terms of assembly, interacts with MAS1. Interacts with ARRB1. Interacts with FLNA (via filamin repeat 21); increases PKA-mediated phosphorylation of FLNA. Post-translationally, C-terminal Ser or Thr residues may be phosphorylated.

It is found in the cell membrane. Its function is as follows. Receptor for angiotensin II, a vasoconstricting peptide, which acts as a key regulator of blood pressure and sodium retention by the kidney. The activated receptor in turn couples to G-alpha proteins G(q) (GNAQ, GNA11, GNA14 or GNA15) and thus activates phospholipase C and increases the cytosolic Ca(2+) concentrations, which in turn triggers cellular responses such as stimulation of protein kinase C. The chain is Type-1 angiotensin II receptor (AGTR1) from Oryctolagus cuniculus (Rabbit).